The chain runs to 107 residues: Multidrug resistance protein mmr (107 aa).

The next 4 membrane-spanning stretches (helical) occupy residues 2-19 (IYLY…ATSL), 29-51 (LWPT…LSIS), 58-80 (VAYA…LFLG), and 84-106 (SVMK…LAGA).

Belongs to the drug/metabolite transporter (DMT) superfamily. Small multidrug resistance (SMR) (TC 2.A.7.1) family. Mmr subfamily.

The protein localises to the cell membrane. In terms of biological role, multidrug efflux pump. Confers resistance to tetraphenylphosphonium (TPP), erythromycin, ethidium bromide, acriflavine, safranin O and pyronin Y. The sequence is that of Multidrug resistance protein mmr (mmr) from Mycobacterium bovis (strain ATCC BAA-935 / AF2122/97).